The following is a 302-amino-acid chain: Methionyl-tRNA formyltransferase (302 aa).

108 to 111 lines the (6S)-5,6,7,8-tetrahydrofolate pocket; that stretch reads SLLP.

This sequence belongs to the Fmt family.

The catalysed reaction is L-methionyl-tRNA(fMet) + (6R)-10-formyltetrahydrofolate = N-formyl-L-methionyl-tRNA(fMet) + (6S)-5,6,7,8-tetrahydrofolate + H(+). In terms of biological role, attaches a formyl group to the free amino group of methionyl-tRNA(fMet). The formyl group appears to play a dual role in the initiator identity of N-formylmethionyl-tRNA by promoting its recognition by IF2 and preventing the misappropriation of this tRNA by the elongation apparatus. The protein is Methionyl-tRNA formyltransferase of Nitratiruptor sp. (strain SB155-2).